We begin with the raw amino-acid sequence, 629 residues long: tRNA uridine 5-carboxymethylaminomethyl modification enzyme MnmG (629 aa).

FAD is bound by residues G13–G18, V125, and S180. G273–F287 lines the NAD(+) pocket. FAD is bound at residue Q370.

Belongs to the MnmG family. As to quaternary structure, homodimer. Heterotetramer of two MnmE and two MnmG subunits. FAD serves as cofactor.

The protein localises to the cytoplasm. Its function is as follows. NAD-binding protein involved in the addition of a carboxymethylaminomethyl (cmnm) group at the wobble position (U34) of certain tRNAs, forming tRNA-cmnm(5)s(2)U34. In Serratia proteamaculans (strain 568), this protein is tRNA uridine 5-carboxymethylaminomethyl modification enzyme MnmG.